Here is a 294-residue protein sequence, read N- to C-terminus: Xyloglucan endotransglucosylase protein 34 (294 aa).

The first 22 residues, 1–22 (MAAAYPWTLFLGMLVMVSGTMG), serve as a signal peptide directing secretion. Positions 23–221 (AALRKPVDVA…WSKAPFIASY (199 aa)) constitute a GH16 domain. The active-site Nucleophile is Glu-107. The active-site Proton donor is Glu-111. Glu-111 is a binding site for xyloglucan. N-linked (GlcNAc...) asparagine glycosylation is present at Asn-115. Residues 124-126 (QTN), 134-136 (DRE), 200-201 (DW), and Gly-205 contribute to the xyloglucan site. 2 disulfides stabilise this stretch: Cys-229-Cys-238 and Cys-275-Cys-288. Residue Arg-280 coordinates xyloglucan.

It belongs to the glycosyl hydrolase 16 family. XTH group 1 subfamily. Post-translationally, contains at least one intrachain disulfide bond essential for its enzymatic activity. In terms of processing, N-glycosylated. Contains N-acetylglucosamine and mannose. Glycosylation is not essential for its catalytic activity. Expressed in mature gelatinous (G) cell wall layer of the tension wood fibers. Highly expressed in the outer zone of the G layer close to the secondary S2 layer. Not expressed in the mature walls of the ray cells or vessel elements (at protein level). Highest expression in both the phloem/cambium and differentiating xylem of the mature stem containing primarily secondary cell wall forming cells, in root tips and young roots. Expressed at low levels in apical bud.

The protein resides in the secreted. Its subcellular location is the cell wall. The protein localises to the extracellular space. It localises to the apoplast. It is found in the cytoplasm. The catalysed reaction is breaks a beta-(1-&gt;4) bond in the backbone of a xyloglucan and transfers the xyloglucanyl segment on to O-4 of the non-reducing terminal glucose residue of an acceptor, which can be a xyloglucan or an oligosaccharide of xyloglucan.. Functionally, catalyzes xyloglucan endotransglycosylation (XET). Cleaves and religates xyloglucan polymers. Does not catalyze xyloglucan endohydrolysis (XEH). Involved in early phases of secondary (S) cell wall formation in fibers of the xylem and phloem vascular tissues of wood stems. May play a role in restructuring primary cell walls, possibly creating and reinforcing the connections between the primary and S cell wall layers. Functions in the gelatinous (G) layers of the tension wood fibers that are involved in bending of the wood stems. May play a role in G fiber shrinking by repairing broken xyloglucan cross-links between G and S2 cell wall layers via its XET activity to maintain connections between the layers. The sequence is that of Xyloglucan endotransglucosylase protein 34 from Populus tremula x Populus tremuloides (Hybrid aspen).